A 343-amino-acid polypeptide reads, in one-letter code: Small ribosomal subunit biogenesis GTPase RsgA (343 aa).

Residues 116 to 275 (RGQLKPVAAN…LIDSPGIREF (160 aa)) form the CP-type G domain. GTP-binding positions include 163 to 166 (NKAD) and 217 to 225 (GQSGVGKSS). Zn(2+) contacts are provided by Cys299, Cys304, His306, and Cys312.

Belongs to the TRAFAC class YlqF/YawG GTPase family. RsgA subfamily. As to quaternary structure, monomer. Associates with 30S ribosomal subunit, binds 16S rRNA. The cofactor is Zn(2+).

The protein localises to the cytoplasm. Its function is as follows. One of several proteins that assist in the late maturation steps of the functional core of the 30S ribosomal subunit. Helps release RbfA from mature subunits. May play a role in the assembly of ribosomal proteins into the subunit. Circularly permuted GTPase that catalyzes slow GTP hydrolysis, GTPase activity is stimulated by the 30S ribosomal subunit. In Pseudomonas savastanoi pv. phaseolicola (strain 1448A / Race 6) (Pseudomonas syringae pv. phaseolicola (strain 1448A / Race 6)), this protein is Small ribosomal subunit biogenesis GTPase RsgA.